The sequence spans 584 residues: DNA mismatch repair protein MutL (584 aa).

Belongs to the DNA mismatch repair MutL/HexB family.

Its function is as follows. This protein is involved in the repair of mismatches in DNA. It is required for dam-dependent methyl-directed DNA mismatch repair. May act as a 'molecular matchmaker', a protein that promotes the formation of a stable complex between two or more DNA-binding proteins in an ATP-dependent manner without itself being part of a final effector complex. The protein is DNA mismatch repair protein MutL of Buchnera aphidicola subsp. Acyrthosiphon pisum (strain 5A).